The following is a 187-amino-acid chain: Crossover junction endodeoxyribonuclease RuvC (187 aa).

Catalysis depends on residues D7, E67, and D140. Positions 7, 67, and 140 each coordinate Mg(2+).

Belongs to the RuvC family. As to quaternary structure, homodimer which binds Holliday junction (HJ) DNA. The HJ becomes 2-fold symmetrical on binding to RuvC with unstacked arms; it has a different conformation from HJ DNA in complex with RuvA. In the full resolvosome a probable DNA-RuvA(4)-RuvB(12)-RuvC(2) complex forms which resolves the HJ. It depends on Mg(2+) as a cofactor.

The protein localises to the cytoplasm. It catalyses the reaction Endonucleolytic cleavage at a junction such as a reciprocal single-stranded crossover between two homologous DNA duplexes (Holliday junction).. The RuvA-RuvB-RuvC complex processes Holliday junction (HJ) DNA during genetic recombination and DNA repair. Endonuclease that resolves HJ intermediates. Cleaves cruciform DNA by making single-stranded nicks across the HJ at symmetrical positions within the homologous arms, yielding a 5'-phosphate and a 3'-hydroxyl group; requires a central core of homology in the junction. The consensus cleavage sequence is 5'-(A/T)TT(C/G)-3'. Cleavage occurs on the 3'-side of the TT dinucleotide at the point of strand exchange. HJ branch migration catalyzed by RuvA-RuvB allows RuvC to scan DNA until it finds its consensus sequence, where it cleaves and resolves the cruciform DNA. The polypeptide is Crossover junction endodeoxyribonuclease RuvC (Chlorobium phaeobacteroides (strain DSM 266 / SMG 266 / 2430)).